We begin with the raw amino-acid sequence, 231 residues long: Sugar fermentation stimulation protein homolog (231 aa).

The protein belongs to the SfsA family.

This is Sugar fermentation stimulation protein homolog from Geotalea uraniireducens (strain Rf4) (Geobacter uraniireducens).